The sequence spans 214 residues: Cell division protein SepF (214 aa).

A disordered region spans residues 23-70 (YYDDRAPSRGFPRPRFDDGYGRYDGDDYDDPRREPADYPPPAGYRGGY). A compositionally biased stretch (basic and acidic residues) spans 36-58 (PRFDDGYGRYDGDDYDDPRREPA).

It belongs to the SepF family. Homodimer. Interacts with FtsZ.

The protein resides in the cytoplasm. Functionally, cell division protein that is part of the divisome complex and is recruited early to the Z-ring. Probably stimulates Z-ring formation, perhaps through the cross-linking of FtsZ protofilaments. Its function overlaps with FtsA. The protein is Cell division protein SepF of Mycobacterium avium (strain 104).